The primary structure comprises 387 residues: Xylose isomerase (387 aa).

Residues His-53 and Asp-56 contribute to the active site. Mg(2+) is bound by residues Glu-180, Glu-216, His-219, Asp-244, Asp-254, Asp-256, and Asp-286.

Belongs to the xylose isomerase family. Homotetramer. Requires Mg(2+) as cofactor.

It localises to the cytoplasm. The catalysed reaction is alpha-D-xylose = alpha-D-xylulofuranose. This Thermus caldophilus protein is Xylose isomerase (xylA).